A 1150-amino-acid chain; its full sequence is ATP-dependent helicase/deoxyribonuclease subunit B (1150 aa).

8–15 (GRSGSGKS) contributes to the ATP binding site. [4Fe-4S] cluster contacts are provided by cysteine 789, cysteine 1108, cysteine 1111, and cysteine 1117.

Belongs to the helicase family. AddB/RexB type 1 subfamily. Heterodimer of AddA and AddB. Mg(2+) is required as a cofactor. Requires [4Fe-4S] cluster as cofactor.

In terms of biological role, the heterodimer acts as both an ATP-dependent DNA helicase and an ATP-dependent, dual-direction single-stranded exonuclease. Recognizes the chi site generating a DNA molecule suitable for the initiation of homologous recombination. The AddB subunit has 5' -&gt; 3' nuclease activity but not helicase activity. The chain is ATP-dependent helicase/deoxyribonuclease subunit B from Clostridium tetani (strain Massachusetts / E88).